The following is a 176-amino-acid chain: 2-C-methyl-D-erythritol 2,4-cyclodiphosphate synthase (176 aa).

A divalent metal cation is bound by residues Asp23, His25, and His60. 23 to 25 (DSH) provides a ligand contact to 4-CDP-2-C-methyl-D-erythritol 2-phosphate. 149–152 (TSGE) provides a ligand contact to 4-CDP-2-C-methyl-D-erythritol 2-phosphate.

It belongs to the IspF family. In terms of assembly, homotrimer. A divalent metal cation is required as a cofactor.

The enzyme catalyses 4-CDP-2-C-methyl-D-erythritol 2-phosphate = 2-C-methyl-D-erythritol 2,4-cyclic diphosphate + CMP. It functions in the pathway isoprenoid biosynthesis; isopentenyl diphosphate biosynthesis via DXP pathway; isopentenyl diphosphate from 1-deoxy-D-xylulose 5-phosphate: step 4/6. Its function is as follows. Involved in the biosynthesis of isopentenyl diphosphate (IPP) and dimethylallyl diphosphate (DMAPP), two major building blocks of isoprenoid compounds. Catalyzes the conversion of 4-diphosphocytidyl-2-C-methyl-D-erythritol 2-phosphate (CDP-ME2P) to 2-C-methyl-D-erythritol 2,4-cyclodiphosphate (ME-CPP) with a corresponding release of cytidine 5-monophosphate (CMP). The polypeptide is 2-C-methyl-D-erythritol 2,4-cyclodiphosphate synthase (Chlamydia abortus (strain DSM 27085 / S26/3) (Chlamydophila abortus)).